The chain runs to 313 residues: Methionyl-tRNA formyltransferase (313 aa).

109–112 contributes to the (6S)-5,6,7,8-tetrahydrofolate binding site; sequence SLLP.

Belongs to the Fmt family.

The catalysed reaction is L-methionyl-tRNA(fMet) + (6R)-10-formyltetrahydrofolate = N-formyl-L-methionyl-tRNA(fMet) + (6S)-5,6,7,8-tetrahydrofolate + H(+). Its function is as follows. Attaches a formyl group to the free amino group of methionyl-tRNA(fMet). The formyl group appears to play a dual role in the initiator identity of N-formylmethionyl-tRNA by promoting its recognition by IF2 and preventing the misappropriation of this tRNA by the elongation apparatus. This Thermotoga neapolitana (strain ATCC 49049 / DSM 4359 / NBRC 107923 / NS-E) protein is Methionyl-tRNA formyltransferase.